Consider the following 243-residue polypeptide: UPF0688 protein C1orf174 (243 aa).

Disordered stretches follow at residues 78–100 (NDSA…AEGS) and 132–243 (LAKT…DAEM). Residues 145–157 (SAGSGAEESNSSS) show a composition bias toward low complexity. Residues Ser-148 and Ser-189 each carry the phosphoserine modification. The segment covering 233-243 (DDDDDDDDAEM) has biased composition (acidic residues).

The protein belongs to the UPF0688 family.

Its subcellular location is the nucleus. The protein is UPF0688 protein C1orf174 (C1orf174) of Homo sapiens (Human).